The primary structure comprises 39 residues: Photosystem II reaction center protein X (39 aa).

The chain crosses the membrane as a helical span at residues 10–30; that stretch reads WSLVLGAAIVLIPATIGLIFI.

The protein belongs to the PsbX family. Type 1 subfamily. In terms of assembly, PSII is composed of 1 copy each of membrane proteins PsbA, PsbB, PsbC, PsbD, PsbE, PsbF, PsbH, PsbI, PsbJ, PsbK, PsbL, PsbM, PsbT, PsbX, PsbY, PsbZ, Psb30/Ycf12, peripheral proteins PsbO, CyanoQ (PsbQ), PsbU, PsbV and a large number of cofactors. It forms dimeric complexes.

It localises to the cellular thylakoid membrane. Its function is as follows. Involved in the binding and/or turnover of quinones at the Q(B) site of photosystem II (PSII). PSII is a light-driven water plastoquinone oxidoreductase, using light energy to abstract electrons from H(2)O, generating a proton gradient subsequently used for ATP formation. This is Photosystem II reaction center protein X from Microcystis aeruginosa (strain NIES-843 / IAM M-2473).